Consider the following 384-residue polypeptide: Stress response protein bis1 (384 aa).

Disordered regions lie at residues 1 to 22 (MSLAKKIDDDEKQLVKPVNKEQ) and 344 to 384 (SPLH…PKRV).

Belongs to the ESS2 family. In terms of assembly, heterodimer with ish1.

The protein localises to the nucleus. It is found in the cytoplasm. Its subcellular location is the cytoskeleton. The protein resides in the spindle. Its function is as follows. Has a role in maintaining cell viability during stationary phase induced by stress response. May be involved in pre-mRNA splicing. In Schizosaccharomyces pombe (strain 972 / ATCC 24843) (Fission yeast), this protein is Stress response protein bis1 (bis1).